The following is a 583-amino-acid chain: Zinc finger protein 277 (583 aa).

2 consecutive C2H2-type zinc fingers follow at residues 351 to 375 (LQCLYCEKTFRDKNTLKDHMRKKQH) and 482 to 508 (HQCKCYSCHVKFKSKADLRTHMEDTKH).

This sequence belongs to the ZNF277 family. As to quaternary structure, interacts (via zinc-finger domains) with RPS2/40S ribosomal protein S2, perhaps as nascent RPS2 is synthesized during translation; the interaction is direct; the interaction is extra-ribosomal. Interaction with RPS2 competes with the binding of RPS2 to protein arginine methyltransferase PRMT3. Interacts with Polycomb group (PcG) complex protein BMI1. May be part of a complex including at least ZNF277, BMI1 and RNF2/RING2.

The protein resides in the nucleus. The protein localises to the cytoplasm. Its subcellular location is the nucleolus. It localises to the chromosome. Probable transcription factor. Involved in modulation of cellular senescence; represses transcription of the tumor suppressor gene INK4A/ARF, perhaps acting via the Polycomb group (PcG) complex PRC1. This is Zinc finger protein 277 from Mus musculus (Mouse).